We begin with the raw amino-acid sequence, 197 residues long: Segregation and condensation protein B (197 aa).

The protein belongs to the ScpB family. Homodimer. Homodimerization may be required to stabilize the binding of ScpA to the Smc head domains. Component of a cohesin-like complex composed of ScpA, ScpB and the Smc homodimer, in which ScpA and ScpB bind to the head domain of Smc. The presence of the three proteins is required for the association of the complex with DNA.

The protein resides in the cytoplasm. Functionally, participates in chromosomal partition during cell division. May act via the formation of a condensin-like complex containing Smc and ScpA that pull DNA away from mid-cell into both cell halves. The chain is Segregation and condensation protein B from Malacoplasma penetrans (strain HF-2) (Mycoplasma penetrans).